Consider the following 367-residue polypeptide: Nodulation protein 10 (367 aa).

A run of 11 helical transmembrane segments spans residues 15 to 37 (FDLLRLFAACQVMFSHAWNWLHL), 46 to 66 (VFDLLFSAPGVAIFFLISGFL), 88 to 108 (IFPALFVNIAVMELALLVTGG), 109 to 129 (LNVTGILQYLFYFTVYILTAA), 155 to 175 (VLWTLTVELTFYLTLPMLLEI), 183 to 203 (GALVVAVAALGSWVMAQHFNI), 208 to 228 (NPFLSVTAGPTFWIFSMGVLA), 245 to 265 (WWLATHLAITWWVAGTSAAFI), 270 to 290 (AAPVDAFRIAVLAGLVLSAAH), 312 to 332 (MLVMHTLIAIGWVGHWWLWIV), and 335 to 355 (VGTVALAALSWALIEQPAMKL).

The protein belongs to the acyltransferase 3 family.

The protein resides in the cell membrane. Functionally, not known. NodX allows Rhizobium leguminosarum biovar viciae strain TOM to nodulate Afghanistan peas. In Rhizobium leguminosarum bv. viciae, this protein is Nodulation protein 10 (nodX).